The primary structure comprises 94 residues: Co-chaperonin GroES (94 aa).

The protein belongs to the GroES chaperonin family. In terms of assembly, heptamer of 7 subunits arranged in a ring. Interacts with the chaperonin GroEL.

It localises to the cytoplasm. Together with the chaperonin GroEL, plays an essential role in assisting protein folding. The GroEL-GroES system forms a nano-cage that allows encapsulation of the non-native substrate proteins and provides a physical environment optimized to promote and accelerate protein folding. GroES binds to the apical surface of the GroEL ring, thereby capping the opening of the GroEL channel. This is Co-chaperonin GroES from Streptococcus pneumoniae (strain Hungary19A-6).